The primary structure comprises 283 residues: MSQCPFSSNPPAEWHNAELNFSDSMSYGDYLDLGRILSAQHPLSPDHNEMLFIIQHQTSELWMKLMLHELKAAREHVRQGQLPPAFKMLARVSRIFDQLVHAWAVLATMTPSEYKSIRPYLGQSSGFQSFQYREIEFILGNKSAALLRPHAHRPELLQSLEASIATPSMYDEAIALMARSGLSIDPARLALDSTTTTQHDPSVEAAWREVYANPSAYWDLYQLAEKFIDLEDSFRQWRFRHVTTVERIIGFQPGTGGTEGVGYLRKMLDTVLFPELWRVRSSL.

Substrate-binding positions include 52-56 (FIIQH), Tyr-114, and Arg-118. His-241 lines the heme pocket. Substrate is bound at residue Thr-255.

Belongs to the tryptophan 2,3-dioxygenase family. Homotetramer. Heme is required as a cofactor.

It carries out the reaction L-tryptophan + O2 = N-formyl-L-kynurenine. The protein operates within amino-acid degradation; L-tryptophan degradation via kynurenine pathway; L-kynurenine from L-tryptophan: step 1/2. Its function is as follows. Heme-dependent dioxygenase that catalyzes the oxidative cleavage of the L-tryptophan (L-Trp) pyrrole ring and converts L-tryptophan to N-formyl-L-kynurenine. Catalyzes the oxidative cleavage of the indole moiety. This Pseudomonas fluorescens (strain ATCC BAA-477 / NRRL B-23932 / Pf-5) protein is Tryptophan 2,3-dioxygenase.